Reading from the N-terminus, the 233-residue chain is Glucosamine-6-phosphate deaminase (233 aa).

Aspartate 62 (proton acceptor; for enolization step) is an active-site residue. The active-site For ring-opening step is asparagine 128. Histidine 130 serves as the catalytic Proton acceptor; for ring-opening step. Glutamate 135 (for ring-opening step) is an active-site residue.

The protein belongs to the glucosamine/galactosamine-6-phosphate isomerase family. NagB subfamily.

It catalyses the reaction alpha-D-glucosamine 6-phosphate + H2O = beta-D-fructose 6-phosphate + NH4(+). It functions in the pathway amino-sugar metabolism; N-acetylneuraminate degradation; D-fructose 6-phosphate from N-acetylneuraminate: step 5/5. Catalyzes the reversible isomerization-deamination of glucosamine 6-phosphate (GlcN6P) to form fructose 6-phosphate (Fru6P) and ammonium ion. The chain is Glucosamine-6-phosphate deaminase from Streptococcus agalactiae serotype Ia (strain ATCC 27591 / A909 / CDC SS700).